Here is a 222-residue protein sequence, read N- to C-terminus: tRNA (guanine-N(1)-)-methyltransferase (222 aa).

Residues Gly111 and 131-136 (LGNYVI) contribute to the S-adenosyl-L-methionine site.

This sequence belongs to the RNA methyltransferase TrmD family. In terms of assembly, homodimer.

The protein resides in the cytoplasm. It catalyses the reaction guanosine(37) in tRNA + S-adenosyl-L-methionine = N(1)-methylguanosine(37) in tRNA + S-adenosyl-L-homocysteine + H(+). Functionally, specifically methylates guanosine-37 in various tRNAs. This chain is tRNA (guanine-N(1)-)-methyltransferase, found in Leptospira borgpetersenii serovar Hardjo-bovis (strain JB197).